We begin with the raw amino-acid sequence, 332 residues long: NADH-quinone oxidoreductase subunit H (332 aa).

9 helical membrane passes run 8 to 28, 44 to 66, 78 to 98, 120 to 140, 157 to 177, 196 to 216, 245 to 265, 274 to 294, and 312 to 332; these read IIECILKIIVVLLIFSALAGF, IGPNYVGPYGLLQVVADGIKLFA, PIFILAPSIAAITAFIAMAPI, VGILFVLAVSSCGIYAPLLAG, IQFLSFEVITILSLLAPLMII, WLIFKQPLAFGLFIIAAYVEL, MFFIGEYANMFATAFILSLVF, FIPGGIAILLKVCFFIFLFMW, and WKIMLPLALLNVLITGCILLF.

Belongs to the complex I subunit 1 family. NDH-1 is composed of 14 different subunits. Subunits NuoA, H, J, K, L, M, N constitute the membrane sector of the complex.

It is found in the cell inner membrane. The enzyme catalyses a quinone + NADH + 5 H(+)(in) = a quinol + NAD(+) + 4 H(+)(out). NDH-1 shuttles electrons from NADH, via FMN and iron-sulfur (Fe-S) centers, to quinones in the respiratory chain. The immediate electron acceptor for the enzyme in this species is believed to be ubiquinone. Couples the redox reaction to proton translocation (for every two electrons transferred, four hydrogen ions are translocated across the cytoplasmic membrane), and thus conserves the redox energy in a proton gradient. This subunit may bind ubiquinone. The sequence is that of NADH-quinone oxidoreductase subunit H from Helicobacter hepaticus (strain ATCC 51449 / 3B1).